The chain runs to 208 residues: Small ribosomal subunit protein uS4 (208 aa).

Residues 28-48 form a disordered region; that stretch reads YMERRPYGPGEHGRARKKQDS. Positions 95–160 constitute an S4 RNA-binding domain; the sequence is MRLDALVLRA…MPPFQVAAAG (66 aa).

The protein belongs to the universal ribosomal protein uS4 family. As to quaternary structure, part of the 30S ribosomal subunit. Contacts protein S5. The interaction surface between S4 and S5 is involved in control of translational fidelity.

Functionally, one of the primary rRNA binding proteins, it binds directly to 16S rRNA where it nucleates assembly of the body of the 30S subunit. Its function is as follows. With S5 and S12 plays an important role in translational accuracy. The chain is Small ribosomal subunit protein uS4 from Arthrobacter sp. (strain FB24).